Here is a 525-residue protein sequence, read N- to C-terminus: GMP synthase [glutamine-hydrolyzing] (525 aa).

In terms of domain architecture, Glutamine amidotransferase type-1 spans 9–207 (RILILDFGSQ…VHEICGCPAD (199 aa)). Cys-86 acts as the Nucleophile in catalysis. Catalysis depends on residues His-181 and Glu-183. The region spanning 208-400 (WTPGNIVDDL…LGLPADMVYR (193 aa)) is the GMPS ATP-PPase domain. 235-241 (SGGVDSS) is a binding site for ATP.

As to quaternary structure, homodimer.

It carries out the reaction XMP + L-glutamine + ATP + H2O = GMP + L-glutamate + AMP + diphosphate + 2 H(+). The protein operates within purine metabolism; GMP biosynthesis; GMP from XMP (L-Gln route): step 1/1. Functionally, catalyzes the synthesis of GMP from XMP. In Alkalilimnicola ehrlichii (strain ATCC BAA-1101 / DSM 17681 / MLHE-1), this protein is GMP synthase [glutamine-hydrolyzing].